Here is a 139-residue protein sequence, read N- to C-terminus: Prostate-associated microseminoprotein (139 aa).

The first 35 residues, 1-35, serve as a signal peptide directing secretion; that stretch reads MALRMLWAGQAKGILGGWRTICLVVSLFLQHPGVS. Intrachain disulfides connect cysteine 38–cysteine 78, cysteine 46–cysteine 69, cysteine 64–cysteine 100, cysteine 67–cysteine 77, and cysteine 91–cysteine 114. The tract at residues 116 to 139 is disordered; sequence GGGPDLEWGSANTPAPGASAPHSS.

Belongs to the beta-microseminoprotein family.

Its subcellular location is the secreted. In terms of biological role, acts as a ligand for C-C chemokine receptor CCR2. Signals through binding and activation of CCR2 and induces a strong chemotactic response and mobilization of intracellular calcium ions. Exhibits a chemotactic activity for monocytes and lymphocytes but not neutrophils. The chain is Prostate-associated microseminoprotein (Msmp) from Mus musculus (Mouse).